Here is a 496-residue protein sequence, read N- to C-terminus: E3 ubiquitin-protein ligase XIAP (496 aa).

BIR repeat units lie at residues 26 to 93 (EFNR…CRFI), 163 to 230 (EEAR…CFFV), and 264 to 329 (YDAR…CKYL). Zn(2+) is bound by residues Cys299, Cys302, and His319. Residue Lys321 forms a Glycyl lysine isopeptide (Lys-Gly) (interchain with G-Cter in ubiquitin) linkage. Cys326 contacts Zn(2+). Lys327 participates in a covalent cross-link: Glycyl lysine isopeptide (Lys-Gly) (interchain with G-Cter in ubiquitin). Cys449 carries the post-translational modification S-nitrosocysteine. The RING-type zinc-finger motif lies at 449-484 (CKICMDRNIAIVFVPCGHLVTCKQCAEAVDKCPMCC).

Belongs to the IAP family. Monomer, and homodimer. Interacts (via BIR3 domain) with DIABLO/SMAC; the interaction inhibits apoptotic suppressor activity. Interacts with HTRA2/PRSS25; the interaction inhibits apoptotic suppressor activity. Interacts with TAB1/MAP3K7IP1 and AIFM1. Interaction with DIABLO/SMAC hinders binding of TAB1/MAP3K7IP1 and AIFM1. Interacts with TCF25 and COMMD1. Interacts (via BIR3 domain) with SEPTIN4. Interacts with RIP1, RIP2, RIP3, RIP4, CCS and USP19. Interacts (via BIR 2 domain and BIR 3 domain) with HAX1 (via C-terminus) and this interaction blocks ubiquitination of XIAP/BIRC4. Interacts with the monomeric form of BIRC5/survivin. Interacts with TLE3 and TCF7L2/TCF4. Interacts (via BIR 3 and RING domains) with PDCL3. S-Nitrosylation down-regulates its E3 ubiquitin-protein ligase activity. Post-translationally, autoubiquitinated. Ubiquitinated by TRIM32; leading to proteasomal degradation.

Its subcellular location is the cytoplasm. It localises to the nucleus. It carries out the reaction S-ubiquitinyl-[E2 ubiquitin-conjugating enzyme]-L-cysteine + [acceptor protein]-L-lysine = [E2 ubiquitin-conjugating enzyme]-L-cysteine + N(6)-ubiquitinyl-[acceptor protein]-L-lysine.. Multi-functional protein which regulates not only caspases and apoptosis, but also modulates inflammatory signaling and immunity, copper homeostasis, mitogenic kinase signaling, cell proliferation, as well as cell invasion and metastasis. Acts as a direct caspase inhibitor. Directly bind to the active site pocket of CASP3 and CASP7 and obstructs substrate entry. Inactivates CASP9 by keeping it in a monomeric, inactive state. Acts as an E3 ubiquitin-protein ligase regulating NF-kappa-B signaling and the target proteins for its E3 ubiquitin-protein ligase activity include: RIPK1, RIPK2, MAP3K2/MEKK2, DIABLO/SMAC, AIFM1, CCS, PTEN and BIRC5/survivin. Acts as an important regulator of innate immunity by mediating 'Lys-63'-linked polyubiquitination of RIPK2 downstream of NOD1 and NOD2, thereby transforming RIPK2 into a scaffolding protein for downstream effectors, ultimately leading to activation of the NF-kappa-B and MAP kinases signaling. 'Lys-63'-linked polyubiquitination of RIPK2 also promotes recruitment of the LUBAC complex to RIPK2. Regulates the BMP signaling pathway and the SMAD and MAP3K7/TAK1 dependent pathways leading to NF-kappa-B and JNK activation. Ubiquitination of CCS leads to enhancement of its chaperone activity toward its physiologic target, SOD1, rather than proteasomal degradation. Ubiquitination of MAP3K2/MEKK2 and AIFM1 does not lead to proteasomal degradation. Plays a role in copper homeostasis by ubiquitinating COMMD1 and promoting its proteasomal degradation. Can also function as E3 ubiquitin-protein ligase of the NEDD8 conjugation pathway, targeting effector caspases for neddylation and inactivation. Ubiquitinates and therefore mediates the proteasomal degradation of BCL2 in response to apoptosis. Protects cells from spontaneous formation of the ripoptosome, a large multi-protein complex that has the capability to kill cancer cells in a caspase-dependent and caspase-independent manner. Suppresses ripoptosome formation by ubiquitinating RIPK1 and CASP8. Acts as a positive regulator of Wnt signaling and ubiquitinates TLE1, TLE2, TLE3, TLE4 and AES. Ubiquitination of TLE3 results in inhibition of its interaction with TCF7L2/TCF4 thereby allowing efficient recruitment and binding of the transcriptional coactivator beta-catenin to TCF7L2/TCF4 that is required to initiate a Wnt-specific transcriptional program. In Rattus norvegicus (Rat), this protein is E3 ubiquitin-protein ligase XIAP (Xiap).